We begin with the raw amino-acid sequence, 122 residues long: Large ribosomal subunit protein uL14 (122 aa).

The protein belongs to the universal ribosomal protein uL14 family. As to quaternary structure, part of the 50S ribosomal subunit. Forms a cluster with proteins L3 and L19. In the 70S ribosome, L14 and L19 interact and together make contacts with the 16S rRNA in bridges B5 and B8.

Its function is as follows. Binds to 23S rRNA. Forms part of two intersubunit bridges in the 70S ribosome. In Geobacillus thermodenitrificans (strain NG80-2), this protein is Large ribosomal subunit protein uL14.